The sequence spans 149 residues: Oligosaccharyltransferase complex subunit OSTC (149 aa).

At 1 to 32 the chain is on the cytoplasmic side; sequence METLYRVPFLVLECPNLKLKKPPWVHMPSAMT. Residues 33 to 53 traverse the membrane as a helical segment; that stretch reads VYALVVVSYFLITGGIIYDVI. Topologically, residues 54-83 are extracellular; the sequence is VEPPSVGSMTDEHGHQRPVAFLAYRVNGQY. The helical transmembrane segment at 84–104 threads the bilayer; that stretch reads IMEGLASSFLFTMGGLGFIIL. Residues 105 to 117 lie on the Cytoplasmic side of the membrane; the sequence is DRSNAPNIPKLNR. Residues 118-138 form a helical membrane-spanning segment; sequence FLLLFIGFVCVLLSFFMARVF. At 139 to 149 the chain is on the extracellular side; it reads MRMKLPGYLMG.

Belongs to the OSTC family. As to quaternary structure, component of STT3A-containing oligosaccharyl transferase (OST-A) complex. STT3A-containing complex assembly occurs through the formation of 3 subcomplexes. Subcomplex 1 contains RPN1 and TMEM258, subcomplex 2 contains the STT3A-specific subunits STT3A, DC2/OSTC, and KCP2 as well as the core subunit OST4, and subcomplex 3 contains RPN2, DAD1, and OST48. The OST-A complex can form stable complexes with the Sec61 complex or with both the Sec61 and TRAP complexes. Interacts with PSEN1 and NCSTN; indicative for an association with the gamma-secretase complex.

The protein resides in the endoplasmic reticulum. It is found in the membrane. It functions in the pathway protein modification; protein glycosylation. Functionally, subunit of STT3A-containing oligosaccharyl transferase (OST-A) complex that catalyzes the initial transfer of a defined glycan (Glc(3)Man(9)GlcNAc(2) in eukaryotes) from the lipid carrier dolichol-pyrophosphate to an asparagine residue within an Asn-X-Ser/Thr consensus motif in nascent polypeptide chains, the first step in protein N-glycosylation. N-glycosylation occurs cotranslationally and the complex associates with the Sec61 complex at the channel-forming translocon complex that mediates protein translocation across the endoplasmic reticulum (ER). Within the OST-A complex, acts as an adapter that anchors the OST-A complex to the Sec61 complex. May be involved in N-glycosylation of APP (amyloid-beta precursor protein). Can modulate gamma-secretase cleavage of APP by enhancing endoprotelysis of PSEN1. In Canis lupus familiaris (Dog), this protein is Oligosaccharyltransferase complex subunit OSTC.